The sequence spans 526 residues: Peptide chain release factor 3 (526 aa).

The 270-residue stretch at 8-277 (GKRRTFAIIS…GLTEWAPAPQ (270 aa)) folds into the tr-type G domain. GTP is bound by residues 17–24 (SHPDAGKT), 85–89 (DTPGH), and 139–142 (NKMD).

This sequence belongs to the TRAFAC class translation factor GTPase superfamily. Classic translation factor GTPase family. PrfC subfamily.

The protein localises to the cytoplasm. In terms of biological role, increases the formation of ribosomal termination complexes and stimulates activities of RF-1 and RF-2. It binds guanine nucleotides and has strong preference for UGA stop codons. It may interact directly with the ribosome. The stimulation of RF-1 and RF-2 is significantly reduced by GTP and GDP, but not by GMP. This is Peptide chain release factor 3 from Aliivibrio salmonicida (strain LFI1238) (Vibrio salmonicida (strain LFI1238)).